We begin with the raw amino-acid sequence, 350 residues long: Selenide, water dikinase (350 aa).

Cysteine 17 is an active-site residue. ATP-binding positions include lysine 20 and leucine 48–aspartate 50. Residue aspartate 51 coordinates Mg(2+). Residues aspartate 68, aspartate 91, and glycine 139–serine 141 each bind ATP. Aspartate 91 serves as a coordination point for Mg(2+). Aspartate 229 serves as a coordination point for Mg(2+).

This sequence belongs to the selenophosphate synthase 1 family. Class I subfamily. Homodimer. Mg(2+) is required as a cofactor.

The enzyme catalyses hydrogenselenide + ATP + H2O = selenophosphate + AMP + phosphate + 2 H(+). Functionally, synthesizes selenophosphate from selenide and ATP. The sequence is that of Selenide, water dikinase from Bdellovibrio bacteriovorus (strain ATCC 15356 / DSM 50701 / NCIMB 9529 / HD100).